The sequence spans 373 residues: Dual-specificity RNA methyltransferase RlmN (373 aa).

Residue E94 is the Proton acceptor of the active site. The Radical SAM core domain occupies 100–339 (EDDRATLCVS…VTIRKTRGDD (240 aa)). C107 and C344 are joined by a disulfide. C114, C118, and C121 together coordinate [4Fe-4S] cluster. S-adenosyl-L-methionine contacts are provided by residues 168–169 (GE), S200, 222–224 (SLH), and N301. The active-site S-methylcysteine intermediate is the C344.

It belongs to the radical SAM superfamily. RlmN family. [4Fe-4S] cluster serves as cofactor.

It is found in the cytoplasm. The enzyme catalyses adenosine(2503) in 23S rRNA + 2 reduced [2Fe-2S]-[ferredoxin] + 2 S-adenosyl-L-methionine = 2-methyladenosine(2503) in 23S rRNA + 5'-deoxyadenosine + L-methionine + 2 oxidized [2Fe-2S]-[ferredoxin] + S-adenosyl-L-homocysteine. The catalysed reaction is adenosine(37) in tRNA + 2 reduced [2Fe-2S]-[ferredoxin] + 2 S-adenosyl-L-methionine = 2-methyladenosine(37) in tRNA + 5'-deoxyadenosine + L-methionine + 2 oxidized [2Fe-2S]-[ferredoxin] + S-adenosyl-L-homocysteine. Functionally, specifically methylates position 2 of adenine 2503 in 23S rRNA and position 2 of adenine 37 in tRNAs. m2A2503 modification seems to play a crucial role in the proofreading step occurring at the peptidyl transferase center and thus would serve to optimize ribosomal fidelity. The polypeptide is Dual-specificity RNA methyltransferase RlmN (Vibrio cholerae serotype O1 (strain M66-2)).